Consider the following 479-residue polypeptide: UDP-N-acetylmuramoyl-L-alanyl-D-glutamate--2,6-diaminopimelate ligase (479 aa).

Ser-21 contacts UDP-N-acetyl-alpha-D-muramoyl-L-alanyl-D-glutamate. 98-104 (GTNGKSS) is a binding site for ATP. UDP-N-acetyl-alpha-D-muramoyl-L-alanyl-D-glutamate-binding positions include 144-145 (TT), Ser-171, Gln-177, and Arg-179. The residue at position 211 (Lys-211) is an N6-carboxylysine. Residues Arg-372, 396-399 (DNPR), Gly-446, and Glu-450 contribute to the meso-2,6-diaminopimelate site. The Meso-diaminopimelate recognition motif motif lies at 396–399 (DNPR).

This sequence belongs to the MurCDEF family. MurE subfamily. It depends on Mg(2+) as a cofactor. Carboxylation is probably crucial for Mg(2+) binding and, consequently, for the gamma-phosphate positioning of ATP.

The protein resides in the cytoplasm. It carries out the reaction UDP-N-acetyl-alpha-D-muramoyl-L-alanyl-D-glutamate + meso-2,6-diaminopimelate + ATP = UDP-N-acetyl-alpha-D-muramoyl-L-alanyl-gamma-D-glutamyl-meso-2,6-diaminopimelate + ADP + phosphate + H(+). The protein operates within cell wall biogenesis; peptidoglycan biosynthesis. Catalyzes the addition of meso-diaminopimelic acid to the nucleotide precursor UDP-N-acetylmuramoyl-L-alanyl-D-glutamate (UMAG) in the biosynthesis of bacterial cell-wall peptidoglycan. The protein is UDP-N-acetylmuramoyl-L-alanyl-D-glutamate--2,6-diaminopimelate ligase of Rickettsia rickettsii.